The following is a 181-amino-acid chain: Ribonuclease HII (181 aa).

The region spanning 1–181 is the RNase H type-2 domain; sequence MICGIDEVGR…SLHRRNFKLI (181 aa). A divalent metal cation is bound by residues D6, E7, and D98.

It belongs to the RNase HII family. It depends on Mn(2+) as a cofactor. The cofactor is Mg(2+).

Its subcellular location is the cytoplasm. It catalyses the reaction Endonucleolytic cleavage to 5'-phosphomonoester.. In terms of biological role, endonuclease that specifically degrades the RNA of RNA-DNA hybrids. The chain is Ribonuclease HII from Borrelia garinii subsp. bavariensis (strain ATCC BAA-2496 / DSM 23469 / PBi) (Borreliella bavariensis).